A 379-amino-acid polypeptide reads, in one-letter code: UPF0450 protein C17orf58 homolog (379 aa).

The N-terminal stretch at 1 to 17 (MIPALTVPLLFLCATSA) is a signal peptide. Disordered stretches follow at residues 76 to 95 (RTRATHPQRQGQDLALPDKT) and 162 to 194 (TASQNLQGRKYSRNNDYGSMDHESNRPGKMNPH). The segment covering 180-194 (SMDHESNRPGKMNPH) has biased composition (basic and acidic residues). Cystine bridges form between C234/C308, C238/C312, and C249/C378. Residues 234-378 (CIAECHRDKD…KVLAAAHSKC (145 aa)) form the NTR domain.

Belongs to the UPF0450 family.

The polypeptide is UPF0450 protein C17orf58 homolog (Xenopus laevis (African clawed frog)).